We begin with the raw amino-acid sequence, 159 residues long: Betainyl-CoA thioesterase (159 aa).

It belongs to the betainyl-CoA thioesterase family.

The enzyme catalyses N,N,N-trimethylglycyl-CoA + H2O = glycine betaine + CoA + H(+). The protein operates within amine and polyamine metabolism; carnitine metabolism. In terms of biological role, catalyzes the cleavage of betainyl-CoA (N,N,N-trimethylglycyl-CoA) into glycine betaine and coenzyme A. Is involved in a L-carnitine degradation pathway that allows P.aeruginosa to grow on L-carnitine as the sole source of carbon and nitrogen. This Pseudomonas aeruginosa (strain ATCC 15692 / DSM 22644 / CIP 104116 / JCM 14847 / LMG 12228 / 1C / PRS 101 / PAO1) protein is Betainyl-CoA thioesterase.